We begin with the raw amino-acid sequence, 111 residues long: Cytochrome c-550 (111 aa).

4 residues coordinate heme c: C13, C16, H17, and M90.

In terms of processing, binds 1 heme c group covalently per subunit.

In Novispirillum itersonii (Aquaspirillum itersonii), this protein is Cytochrome c-550.